A 240-amino-acid chain; its full sequence is Probable transcriptional regulatory protein Hac_0344 (240 aa).

Belongs to the TACO1 family.

It is found in the cytoplasm. This is Probable transcriptional regulatory protein Hac_0344 from Helicobacter acinonychis (strain Sheeba).